A 95-amino-acid polypeptide reads, in one-letter code: DNA-directed RNA polymerase subunit Rpo6 (95 aa).

Belongs to the archaeal Rpo6/eukaryotic RPB6 RNA polymerase subunit family. Part of the 13-subunit RNA polymerase complex.

Its subcellular location is the cytoplasm. The catalysed reaction is RNA(n) + a ribonucleoside 5'-triphosphate = RNA(n+1) + diphosphate. DNA-dependent RNA polymerase (RNAP) catalyzes the transcription of DNA into RNA using the four ribonucleoside triphosphates as substrates. The chain is DNA-directed RNA polymerase subunit Rpo6 from Saccharolobus solfataricus (strain ATCC 35092 / DSM 1617 / JCM 11322 / P2) (Sulfolobus solfataricus).